The primary structure comprises 169 residues: Ribonuclease H (169 aa).

Residues 3–159 enclose the RNase H type-1 domain; sequence AHAALTLYTD…CDRLATDAAR (157 aa). Mg(2+)-binding residues include D12, E63, D87, and D151.

It belongs to the RNase H family. As to quaternary structure, monomer. It depends on Mg(2+) as a cofactor.

It localises to the cytoplasm. It carries out the reaction Endonucleolytic cleavage to 5'-phosphomonoester.. Its function is as follows. Endonuclease that specifically degrades the RNA of RNA-DNA hybrids. The chain is Ribonuclease H from Treponema pallidum subsp. pallidum (strain SS14).